We begin with the raw amino-acid sequence, 504 residues long: Pyruvate kinase (504 aa).

Arg53 serves as a coordination point for substrate. Positions 55, 57, 88, and 89 each coordinate K(+). 55–58 (NFSH) contributes to the ATP binding site. Positions 95 and 181 each coordinate ATP. A Mg(2+)-binding site is contributed by Glu246. Residues Gly269, Asp270, and Thr302 each coordinate substrate. Mg(2+) is bound at residue Asp270.

This sequence belongs to the pyruvate kinase family. Homotetramer. Mg(2+) serves as cofactor. Requires K(+) as cofactor.

The protein localises to the cytoplasm. It carries out the reaction pyruvate + ATP = phosphoenolpyruvate + ADP + H(+). Its pathway is carbohydrate degradation; glycolysis; pyruvate from D-glyceraldehyde 3-phosphate: step 5/5. This Candida albicans (strain SC5314 / ATCC MYA-2876) (Yeast) protein is Pyruvate kinase (CDC19).